Consider the following 405-residue polypeptide: MTIDRRALGFGGSERAVYAADPWTTRGRLYPEDDSPTRSDFQRDRDRIVHTTAFRRLKHKTQVFIAQDGDHYRTRLTHTIEVAQIARALARALKLDEDLAEGVALVHDFGHTPFGHTGEDALHEVLLPYGGFDHNAQSLRIVTKLERRYAEFDGINLTWESLEGLVKHNGPLLTPDGVGTRGPVPQPILDYCELHDLELATYASLEAQVAAIADDIAYNTHDIDDGLRSGYLTFEMLEEIPFLAGLMAEVRARYPHLEPSRFTHEIMRRQITRMVEDVIGVAQQRLSLLRPQSAADIRAADRMIATFSDAMAETDRQIKAMLFKRIYRNPDIMRIRAGAAQIVTDLFGAYMASPKEMQSHYWVDHIAGLADAPKARHVGDYLAGMTDTYAISAHRRLFDHTPDLR.

Residues 75 to 219 (RLTHTIEVAQ…AAIADDIAYN (145 aa)) enclose the HD domain.

It belongs to the dGTPase family. Type 2 subfamily.

This chain is Deoxyguanosinetriphosphate triphosphohydrolase-like protein, found in Rhizobium etli (strain CIAT 652).